The following is a 438-amino-acid chain: Alpha-methylserine aldolase (438 aa).

Lys252 carries the N6-(pyridoxal phosphate)lysine modification.

The protein belongs to the SHMT family. Alpha-methylserine aldolase subfamily. In terms of assembly, homodimer. The cofactor is pyridoxal 5'-phosphate.

The catalysed reaction is 2-methyl-L-serine = formaldehyde + L-alanine. In the alpha-methyl-L-serine synthesis reaction, activity is inhibited by an excess amount of formaldehyde (at a concentration greater than 10 mM). In terms of biological role, catalyzes the reversible interconversion of alpha-methyl-L-serine to L-alanine and formaldehyde. Cannot use alpha-methyl-D-serine, L-serine or D-serine. Cannot use D-alanine instead of L-alanine as the substrate for alpha-methyl-L-serine synthesis. Does not require tetrahydrofolate (THF) for activity. This is Alpha-methylserine aldolase from Ralstonia sp.